Reading from the N-terminus, the 221-residue chain is Holliday junction branch migration complex subunit RuvA (221 aa).

The domain I stretch occupies residues 1-61; it reads MQIYQFGKIV…DYTKITYGFA (61 aa). A domain II region spans residues 62-139; the sequence is SFRERILFED…RFNENHKNQT (78 aa). The tract at residues 133-155 is disordered; the sequence is ENHKNQTEETNQDSQEKELEKKD. Residues 140-166 are flexible linker; sequence EETNQDSQEKELEKKDDLADITIQKSN. The segment covering 146–155 has biased composition (basic and acidic residues); it reads SQEKELEKKD. Residues 167–221 are domain III; the sequence is LEDKTAANLEDTLKMLGFKPRQIDYALTKVEPNENFENLIENAIKIISNAREFRN.

This sequence belongs to the RuvA family. As to quaternary structure, homotetramer. Forms an RuvA(8)-RuvB(12)-Holliday junction (HJ) complex. HJ DNA is sandwiched between 2 RuvA tetramers; dsDNA enters through RuvA and exits via RuvB. An RuvB hexamer assembles on each DNA strand where it exits the tetramer. Each RuvB hexamer is contacted by two RuvA subunits (via domain III) on 2 adjacent RuvB subunits; this complex drives branch migration. In the full resolvosome a probable DNA-RuvA(4)-RuvB(12)-RuvC(2) complex forms which resolves the HJ.

It localises to the cytoplasm. The RuvA-RuvB-RuvC complex processes Holliday junction (HJ) DNA during genetic recombination and DNA repair, while the RuvA-RuvB complex plays an important role in the rescue of blocked DNA replication forks via replication fork reversal (RFR). RuvA specifically binds to HJ cruciform DNA, conferring on it an open structure. The RuvB hexamer acts as an ATP-dependent pump, pulling dsDNA into and through the RuvAB complex. HJ branch migration allows RuvC to scan DNA until it finds its consensus sequence, where it cleaves and resolves the cruciform DNA. The protein is Holliday junction branch migration complex subunit RuvA of Mesomycoplasma hyopneumoniae (strain J / ATCC 25934 / NCTC 10110) (Mycoplasma hyopneumoniae).